The following is a 339-amino-acid chain: DNA-directed RNA polymerase subunit alpha (339 aa).

The alpha N-terminal domain (alpha-NTD) stretch occupies residues 1 to 235; sequence MTIQKNWQEL…DQLNVFVNFE (235 aa). The segment at 251–339 is alpha C-terminal domain (alpha-CTD); that stretch reads FNPAFLKKVD…ELAKRFEDHY (89 aa).

The protein belongs to the RNA polymerase alpha chain family. Homodimer. The RNAP catalytic core consists of 2 alpha, 1 beta, 1 beta' and 1 omega subunit. When a sigma factor is associated with the core the holoenzyme is formed, which can initiate transcription.

It catalyses the reaction RNA(n) + a ribonucleoside 5'-triphosphate = RNA(n+1) + diphosphate. DNA-dependent RNA polymerase catalyzes the transcription of DNA into RNA using the four ribonucleoside triphosphates as substrates. This is DNA-directed RNA polymerase subunit alpha from Rhodopseudomonas palustris (strain BisB5).